The following is a 122-amino-acid chain: Small ribosomal subunit protein uS13 (122 aa).

The interval 97 to 122 is disordered; that stretch reads PVRGQRTHTNARTRKGPAKAIAGKKK.

It belongs to the universal ribosomal protein uS13 family. As to quaternary structure, part of the 30S ribosomal subunit. Forms a loose heterodimer with protein S19. Forms two bridges to the 50S subunit in the 70S ribosome.

In terms of biological role, located at the top of the head of the 30S subunit, it contacts several helices of the 16S rRNA. In the 70S ribosome it contacts the 23S rRNA (bridge B1a) and protein L5 of the 50S subunit (bridge B1b), connecting the 2 subunits; these bridges are implicated in subunit movement. Contacts the tRNAs in the A and P-sites. The sequence is that of Small ribosomal subunit protein uS13 from Bartonella tribocorum (strain CIP 105476 / IBS 506).